The sequence spans 221 residues: Octanoyltransferase (221 aa).

Positions 35–221 constitute a BPL/LPL catalytic domain; the sequence is ESYENRIIFC…RELLAALLSK (187 aa). Residues 80-87, 152-154, and 165-167 each bind substrate; these read RGGDITYH, AIG, and GLA. Cys-183 functions as the Acyl-thioester intermediate in the catalytic mechanism.

It belongs to the LipB family.

The protein resides in the cytoplasm. It catalyses the reaction octanoyl-[ACP] + L-lysyl-[protein] = N(6)-octanoyl-L-lysyl-[protein] + holo-[ACP] + H(+). The protein operates within protein modification; protein lipoylation via endogenous pathway; protein N(6)-(lipoyl)lysine from octanoyl-[acyl-carrier-protein]: step 1/2. Catalyzes the transfer of endogenously produced octanoic acid from octanoyl-acyl-carrier-protein onto the lipoyl domains of lipoate-dependent enzymes. Lipoyl-ACP can also act as a substrate although octanoyl-ACP is likely to be the physiological substrate. The protein is Octanoyltransferase of Bacteroides fragilis (strain YCH46).